The primary structure comprises 432 residues: Putative D-alanyl-D-alanine carboxypeptidase (432 aa).

A helical; Signal-anchor transmembrane segment spans residues 7–25 (ATVLLTFSLSAFAVEYPVL).

Belongs to the peptidase S12 family. YfeW subfamily.

It is found in the cell inner membrane. It catalyses the reaction Preferential cleavage: (Ac)2-L-Lys-D-Ala-|-D-Ala. Also transpeptidation of peptidyl-alanyl moieties that are N-acyl substituents of D-alanine.. In Salmonella typhimurium (strain LT2 / SGSC1412 / ATCC 700720), this protein is Putative D-alanyl-D-alanine carboxypeptidase.